Consider the following 782-residue polypeptide: uncharacterized protein (782 aa).

Residues 22 to 50 constitute a DNA-binding region (zn(2)-C6 fungal-type); the sequence is CRECHRLKLKCDRVWPCENCKKRGIPNLC. Disordered stretches follow at residues 105 to 126 and 645 to 665; these read GEKP…DPDH and VPSS…AEKA. The segment covering 654–665 has biased composition (basic and acidic residues); the sequence is SPDDSSMRAEKA.

Its subcellular location is the nucleus. This is an uncharacterized protein from Schizosaccharomyces pombe (strain 972 / ATCC 24843) (Fission yeast).